Consider the following 214-residue polypeptide: Urease accessory protein UreG (214 aa).

23–30 (GPVGSGKT) serves as a coordination point for GTP.

Belongs to the SIMIBI class G3E GTPase family. UreG subfamily. As to quaternary structure, homodimer. UreD, UreF and UreG form a complex that acts as a GTP-hydrolysis-dependent molecular chaperone, activating the urease apoprotein by helping to assemble the nickel containing metallocenter of UreC. The UreE protein probably delivers the nickel.

The protein localises to the cytoplasm. In terms of biological role, facilitates the functional incorporation of the urease nickel metallocenter. This process requires GTP hydrolysis, probably effectuated by UreG. The sequence is that of Urease accessory protein UreG from Bordetella bronchiseptica (strain ATCC BAA-588 / NCTC 13252 / RB50) (Alcaligenes bronchisepticus).